The sequence spans 933 residues: Clumping factor A (933 aa).

A signal peptide spans 1–39 (MNMKKKEKHAIRKKSIGVASVLVGTLIGFGLLSSKEADA). A YSIRK-G/S signaling motif motif is present at residues 9 to 20 (HAIRKKSIGVAS). 2 disordered regions span residues 34–200 (SKEA…SNKD) and 529–904 (FNNG…SEDE). The tract at residues 40–542 (SENSVTQSDS…SGSGDGIDKP (503 aa)) is ligand binding A region. Residues 47–65 (SDSASNESKSNDSSSVSAA) are compositionally biased toward low complexity. Over residues 71–105 (TNVSDTKTSSNTNNGETSVAQNPAQQETTQSSSTN) the composition is skewed to polar residues. 2 stretches are compositionally biased toward low complexity: residues 106-132 (ATTE…ATTQ) and 143-162 (NQTS…SVNS). The segment covering 163–200 (PQNSTNAENVSTTQDTSTEATPSNNESAPQSTDASNKD) has biased composition (polar residues). Acidic residues predominate over residues 547 to 565 (QPDEPGEIEPIPEDSDSDP). A compositionally biased stretch (low complexity) spans 566–598 (GSDSGSDSNSDSGSDSGSDSTSDSGSDSASDSD). Residues 599–861 (SASDSDSASD…DSDSESDSNS (263 aa)) are compositionally biased toward acidic residues. Over residues 862 to 880 (DSESGSNNNVVPPNSPKNG) the composition is skewed to low complexity. A compositionally biased stretch (basic and acidic residues) spans 887 to 896 (NEAKDSKEPL). The short motif at 896 to 900 (LPDTG) is the LPXTG sorting signal element. Pentaglycyl murein peptidoglycan amidated threonine is present on Thr899. A propeptide spans 900-933 (GSEDEANTSLIWGLLASIGSLLLFRRKKENKDKK) (removed by sortase).

This sequence belongs to the serine-aspartate repeat-containing protein (SDr) family.

It is found in the secreted. Its subcellular location is the cell wall. Cell surface-associated protein implicated in virulence. Promotes bacterial attachment exclusively to the gamma-chain of human fibrinogen. Induces formation of bacterial clumps. This is Clumping factor A (clfA) from Staphylococcus aureus (strain COL).